The chain runs to 192 residues: LOB domain-containing protein 32 (192 aa).

The LOB domain maps to 4–105; the sequence is NRCAVCKILN…QDIESAVNEL (102 aa).

It belongs to the LOB domain-containing protein family.

This is LOB domain-containing protein 32 (LBD32) from Arabidopsis thaliana (Mouse-ear cress).